A 375-amino-acid chain; its full sequence is Alcohol dehydrogenase E chain (375 aa).

Ser-2 carries the N-acetylserine modification. Residues Cys-47, Ser-49, His-68, Cys-98, Cys-101, Cys-104, Cys-112, and Cys-175 each coordinate Zn(2+). Ser-49 and His-68 together coordinate an alcohol. An NAD(+)-binding site is contributed by Ser-49. NAD(+) contacts are provided by residues 200–205, Asp-224, Lys-229, Val-293, 293–295, Phe-320, and Arg-370; these read GLGGVG and VGV.

The protein belongs to the zinc-containing alcohol dehydrogenase family. Class-I subfamily. In terms of assembly, dimer of identical or non-identical chains of two types (E and S) coded by 2 separate genes at different loci. Zn(2+) serves as cofactor.

It localises to the cytoplasm. It catalyses the reaction a primary alcohol + NAD(+) = an aldehyde + NADH + H(+). It carries out the reaction a secondary alcohol + NAD(+) = a ketone + NADH + H(+). This is Alcohol dehydrogenase E chain from Equus caballus (Horse).